The primary structure comprises 87 residues: Small ribosomal subunit protein bS18 (87 aa).

Belongs to the bacterial ribosomal protein bS18 family. In terms of assembly, part of the 30S ribosomal subunit. Forms a tight heterodimer with protein bS6.

Functionally, binds as a heterodimer with protein bS6 to the central domain of the 16S rRNA, where it helps stabilize the platform of the 30S subunit. In Campylobacter hominis (strain ATCC BAA-381 / DSM 21671 / CCUG 45161 / LMG 19568 / NCTC 13146 / CH001A), this protein is Small ribosomal subunit protein bS18.